Here is a 157-residue protein sequence, read N- to C-terminus: 3-dehydroquinate dehydratase (157 aa).

The Proton acceptor role is filled by Y29. Substrate-binding residues include N80, H86, and D93. Catalysis depends on H107, which acts as the Proton donor. Substrate-binding positions include 108 to 109 (IS) and R118.

This sequence belongs to the type-II 3-dehydroquinase family. In terms of assembly, homododecamer.

It catalyses the reaction 3-dehydroquinate = 3-dehydroshikimate + H2O. Its pathway is metabolic intermediate biosynthesis; chorismate biosynthesis; chorismate from D-erythrose 4-phosphate and phosphoenolpyruvate: step 3/7. In terms of biological role, catalyzes a trans-dehydration via an enolate intermediate. The polypeptide is 3-dehydroquinate dehydratase (aroQ) (Streptomyces coelicolor (strain ATCC BAA-471 / A3(2) / M145)).